The following is a 198-amino-acid chain: Protein FAM219B (198 aa).

2 disordered regions span residues 1-58 and 83-146; these read MATA…KRGP and RRKG…EQVN. Phosphoserine occurs at positions 14, 91, 125, and 127. A compositionally biased stretch (polar residues) spans 134–146; it reads RYSSGYSSAEQVN.

This sequence belongs to the FAM219 family.

The protein is Protein FAM219B (FAM219B) of Homo sapiens (Human).